The following is a 269-amino-acid chain: MERLVIRMPFCHLSTYSLVWVMAAVVLCTAQVQVVTQDEREQLYTPASLKCSLQNAQEALIVTWQKKKAVSPENMVTFSENHGVVIQPAYKDKINIAQLGLQNSTITFWNITLEDEGCYMCLFNTFGFGKISGTACLTVYVQPIVSLHYKFSEDHLNTTCSATARPAPMVFWKVPRSGIENSTVTLSHPNGTTSVTSILHIKDPKNQVGKEAICQVLHLGTVTDFKQTVNKGYWFSVPLLLSIVSLVTLLVLISILLYWKRHRNQDREP.

Positions 1-30 (MERLVIRMPFCHLSTYSLVWVMAAVVLCTA) are cleaved as a signal peptide. The region spanning 31 to 141 (QVQVVTQDER…SGTACLTVYV (111 aa)) is the Ig-like V-type domain. Topologically, residues 31–236 (QVQVVTQDER…QTVNKGYWFS (206 aa)) are extracellular. 2 cysteine pairs are disulfide-bonded: C51/C121 and C118/C136. N-linked (GlcNAc...) asparagine glycosylation is found at N103 and N110. Residues 142 to 232 (QPIVSLHYKF…TDFKQTVNKG (91 aa)) form the Ig-like C2-type domain. N-linked (GlcNAc...) asparagine glycans are attached at residues N157, N181, and N190. A disulfide bridge connects residues C160 and C214. Residues 237-257 (VPLLLSIVSLVTLLVLISILL) traverse the membrane as a helical segment. Residues 258–269 (YWKRHRNQDREP) lie on the Cytoplasmic side of the membrane.

As to quaternary structure, CD200 and CD200R1 interact via their respective N-terminal Ig-like domains.

It is found in the cell membrane. Costimulates T-cell proliferation. May regulate myeloid cell activity in a variety of tissues. The sequence is that of OX-2 membrane glycoprotein (CD200) from Pongo abelii (Sumatran orangutan).